A 191-amino-acid polypeptide reads, in one-letter code: Inosine triphosphate pyrophosphatase (191 aa).

12-17 (TGNKNK) lines the ITP pocket. Position 40 (glutamate 40) interacts with Mg(2+). ITP is bound by residues lysine 52, 68-69 (DS), lysine 85, 144-147 (FGWE), lysine 167, and 172-173 (HR).

It belongs to the HAM1 NTPase family. Homodimer. The cofactor is Mg(2+). Mn(2+) serves as cofactor.

It is found in the cytoplasm. The protein resides in the nucleus. It catalyses the reaction ITP + H2O = IMP + diphosphate + H(+). It carries out the reaction dITP + H2O = dIMP + diphosphate + H(+). The catalysed reaction is XTP + H2O = XMP + diphosphate + H(+). In terms of biological role, pyrophosphatase that hydrolyzes non-canonical purine nucleotides such as inosine triphosphate (ITP), deoxyinosine triphosphate (dITP) or xanthosine 5'-triphosphate (XTP) to their respective monophosphate derivatives. The enzyme does not distinguish between the deoxy- and ribose forms. Probably excludes non-canonical purines from RNA and DNA precursor pools, thus preventing their incorporation into RNA and DNA and avoiding chromosomal lesions. This is Inosine triphosphate pyrophosphatase from Aspergillus oryzae (strain ATCC 42149 / RIB 40) (Yellow koji mold).